The following is a 183-amino-acid chain: Capsid protein (183 aa).

A disordered region spans residues 136–183; the sequence is NAPILSTLPETTVVRRRGRSPRRRTPSPRRRRSQSPRRRRSQSRESQC. Basic residues predominate over residues 149–176; the sequence is VRRRGRSPRRRTPSPRRRRSQSPRRRRS. 3 positions are modified to phosphoserine; by host: Ser-155, Ser-162, and Ser-170. One copy of the 1; half-length repeat lies at 155 to 161; sequence SPRRRTP. The 3 X 8 AA repeats of S-P-R-R-R-[PR]-S-Q stretch occupies residues 155–177; it reads SPRRRTPSPRRRRSQSPRRRRSQ. Positions 158–175 match the Bipartite nuclear localization signal motif; sequence RRTPSPRRRRSQSPRRRR. 2 tandem repeats follow at residues 162–169 and 170–177. The interval 177–183 is RNA binding; that stretch reads QSRESQC.

Belongs to the orthohepadnavirus core antigen family. As to quaternary structure, homodimerizes, then multimerizes. Interacts with cytosol exposed regions of viral L glycoprotein present in the reticulum-to-Golgi compartment. Interacts with human FLNB. Phosphorylated form interacts with host importin alpha; this interaction depends on the exposure of the NLS, which itself depends upon genome maturation and/or phosphorylation of the capsid protein. Interacts with host NUP153. Phosphorylated by host SRPK1, SRPK2, and maybe protein kinase C or GAPDH. Phosphorylation is critical for pregenomic RNA packaging. Protein kinase C phosphorylation is stimulated by HBx protein and may play a role in transport of the viral genome to the nucleus at the late step during the viral replication cycle.

The protein localises to the virion. It localises to the host cytoplasm. Its function is as follows. Self assembles to form an icosahedral capsid. Most capsids appear to be large particles with an icosahedral symmetry of T=4 and consist of 240 copies of capsid protein, though a fraction forms smaller T=3 particles consisting of 180 capsid proteins. Entering capsids are transported along microtubules to the nucleus. Phosphorylation of the capsid is thought to induce exposure of nuclear localization signal in the C-terminal portion of the capsid protein that allows binding to the nuclear pore complex via the importin (karyopherin-) alpha and beta. Capsids are imported in intact form through the nuclear pore into the nuclear basket, where it probably binds NUP153. Only capsids that contain the mature viral genome can release the viral DNA and capsid protein into the nucleoplasm. Immature capsids get stuck in the basket. Capsids encapsulate the pre-genomic RNA and the P protein. Pre-genomic RNA is reverse-transcribed into DNA while the capsid is still in the cytoplasm. The capsid can then either be directed to the nucleus, providing more genomes for transcription, or bud through the endoplasmic reticulum to provide new virions. In Hepatitis B virus genotype B1 subtype adw (isolate Japan/pJDW233/1988) (HBV-B), this protein is Capsid protein.